Reading from the N-terminus, the 231-residue chain is Large ribosomal subunit protein uL1 (231 aa).

This sequence belongs to the universal ribosomal protein uL1 family. Part of the 50S ribosomal subunit.

Binds directly to 23S rRNA. The L1 stalk is quite mobile in the ribosome, and is involved in E site tRNA release. Functionally, protein L1 is also a translational repressor protein, it controls the translation of the L11 operon by binding to its mRNA. This Neisseria meningitidis serogroup C (strain 053442) protein is Large ribosomal subunit protein uL1.